The primary structure comprises 376 residues: Phosphatidylinositol/phosphatidylcholine transfer protein SFH11 (376 aa).

Residues 1–20 (MQETDRDIHISDGTMNKEEQ) show a composition bias toward basic and acidic residues. Residues 1–24 (MQETDRDIHISDGTMNKEEQSPNN) are disordered. Positions 92–266 (EYGEVKKHYP…FLGGNCTCSD (175 aa)) constitute a CRAL-TRIO domain. A coiled-coil region spans residues 323 to 357 (MEKYAALKTAVKDSQKRIEMLEISLHETKKVLNGL).

It belongs to the SFH family.

It localises to the golgi apparatus membrane. Its subcellular location is the cell membrane. Required for transport of secretory proteins from the Golgi complex. Catalyzes the transfer of phosphatidylinositol and phosphatidylcholine between membranes in vitro. The polypeptide is Phosphatidylinositol/phosphatidylcholine transfer protein SFH11 (SFH11) (Arabidopsis thaliana (Mouse-ear cress)).